We begin with the raw amino-acid sequence, 271 residues long: L-aspartate dehydrogenase (271 aa).

Residues Ala-124 and Asn-192 each contribute to the NAD(+) site. The active site involves His-222.

It belongs to the L-aspartate dehydrogenase family.

It carries out the reaction L-aspartate + NADP(+) + H2O = oxaloacetate + NH4(+) + NADPH + H(+). It catalyses the reaction L-aspartate + NAD(+) + H2O = oxaloacetate + NH4(+) + NADH + H(+). It functions in the pathway cofactor biosynthesis; NAD(+) biosynthesis; iminoaspartate from L-aspartate (dehydrogenase route): step 1/1. Its function is as follows. Specifically catalyzes the NAD or NADP-dependent dehydrogenation of L-aspartate to iminoaspartate. The polypeptide is L-aspartate dehydrogenase (Methanosarcina barkeri (strain Fusaro / DSM 804)).